A 306-amino-acid chain; its full sequence is Acyl transferase (306 aa).

Active-site charge relay system residues include serine 117, aspartate 214, and histidine 244.

It belongs to the LuxD family.

The protein operates within lipid metabolism; fatty acid reduction for biolumincescence. In terms of biological role, acyl transferase is part of the fatty acid reductase system required for aldehyde biosynthesis; it produces fatty acids for the luminescent reaction. The protein is Acyl transferase of Photobacterium phosphoreum.